A 584-amino-acid polypeptide reads, in one-letter code: Aspartate--tRNA(Asp/Asn) ligase (584 aa).

An L-aspartate-binding site is contributed by glutamate 177. Residues 201-204 (QLFK) form an aspartate region. Residue arginine 223 coordinates L-aspartate. ATP is bound by residues 223 to 225 (RDE) and glutamine 232. Residue histidine 447 participates in L-aspartate binding. Glutamate 481 is a binding site for ATP. L-aspartate is bound at residue arginine 488. 533–536 (GLDR) contacts ATP.

This sequence belongs to the class-II aminoacyl-tRNA synthetase family. Type 1 subfamily. As to quaternary structure, homodimer.

Its subcellular location is the cytoplasm. The enzyme catalyses tRNA(Asx) + L-aspartate + ATP = L-aspartyl-tRNA(Asx) + AMP + diphosphate. Its function is as follows. Aspartyl-tRNA synthetase with relaxed tRNA specificity since it is able to aspartylate not only its cognate tRNA(Asp) but also tRNA(Asn). Reaction proceeds in two steps: L-aspartate is first activated by ATP to form Asp-AMP and then transferred to the acceptor end of tRNA(Asp/Asn). The protein is Aspartate--tRNA(Asp/Asn) ligase of Chlamydia pneumoniae (Chlamydophila pneumoniae).